A 550-amino-acid polypeptide reads, in one-letter code: Mitochondrial distribution and morphology protein 34 (550 aa).

Positions 1 to 208 constitute an SMP-LTD domain; that stretch reads MAFNFNWSPL…CPEQMSKEDH (208 aa). Disordered regions lie at residues 294-313, 358-505, and 519-550; these read VDKP…LVKS, RNAK…ILEQ, and VYDE…TAAS. Low complexity predominate over residues 300–310; that stretch reads SSTTPLTTPSL. The segment covering 364-376 has biased composition (basic residues); sequence ANRKKKTRVVNLR. 2 stretches are compositionally biased toward polar residues: residues 391 to 407 and 458 to 467; these read MSDS…TMSD and AEISQPQVAR. The segment covering 481–495 has biased composition (basic and acidic residues); that stretch reads SENDKRSDSKRRGPR.

The protein belongs to the MDM34 family. As to quaternary structure, component of the ER-mitochondria encounter structure (ERMES) or MDM complex, composed of MMM1, MDM10, MDM12 and MDM34.

It is found in the mitochondrion outer membrane. Component of the ERMES/MDM complex, which serves as a molecular tether to connect the endoplasmic reticulum (ER) and mitochondria. Components of this complex are involved in the control of mitochondrial shape and protein biogenesis, and function in nonvesicular lipid trafficking between the ER and mitochondria. MDM34 is required for the interaction of the ER-resident membrane protein MMM1 and the outer mitochondrial membrane-resident beta-barrel protein MDM10. This Pyricularia oryzae (strain 70-15 / ATCC MYA-4617 / FGSC 8958) (Rice blast fungus) protein is Mitochondrial distribution and morphology protein 34.